A 211-amino-acid chain; its full sequence is Dihydrofolate reductase (211 aa).

Residues P7 to R210 form the DHFR domain. NADP(+)-binding positions include A13 and G20 to G26. A substrate-binding site is contributed by E34–R39. R58–T60 is a binding site for NADP(+). Residue R74 participates in substrate binding. NADP(+)-binding positions include S80–S82 and G123–Q130.

This sequence belongs to the dihydrofolate reductase family.

It carries out the reaction (6S)-5,6,7,8-tetrahydrofolate + NADP(+) = 7,8-dihydrofolate + NADPH + H(+). It participates in cofactor biosynthesis; tetrahydrofolate biosynthesis; 5,6,7,8-tetrahydrofolate from 7,8-dihydrofolate: step 1/1. Key enzyme in folate metabolism. Catalyzes an essential reaction for de novo glycine and purine synthesis, and for DNA precursor synthesis. The sequence is that of Dihydrofolate reductase (DFR1) from Saccharomyces cerevisiae (strain ATCC 204508 / S288c) (Baker's yeast).